The following is an 826-amino-acid chain: Ribosome-releasing factor 2, mitochondrial (826 aa).

The transit peptide at 1 to 44 (MIVRNLLGKNRLCCLQPKLLLSTLSQRPQLQLSLQLLCRATRLY) directs the protein to the mitochondrion. Residues 53–340 (PKTRNIGIIA…GITNYLPSPL (288 aa)) form the tr-type G domain. GTP is bound by residues 62 to 69 (AHIDAGKT), 126 to 130 (DTPGH), and 180 to 183 (NKMD).

It belongs to the TRAFAC class translation factor GTPase superfamily. Classic translation factor GTPase family. EF-G/EF-2 subfamily.

The protein localises to the mitochondrion. In terms of biological role, mitochondrial GTPase that mediates the disassembly of ribosomes from messenger RNA at the termination of mitochondrial protein biosynthesis. Not involved in the GTP-dependent ribosomal translocation step during translation elongation. The chain is Ribosome-releasing factor 2, mitochondrial from Lodderomyces elongisporus (strain ATCC 11503 / CBS 2605 / JCM 1781 / NBRC 1676 / NRRL YB-4239) (Yeast).